The following is a 493-amino-acid chain: Intermediate cleaving peptidase 55, mitochondrial (493 aa).

Residues 1-19 constitute a mitochondrion transit peptide; sequence MQFLARNLVRRVSRTQVVS. D296, D307, H383, E410, and E433 together coordinate Mn(2+).

It belongs to the peptidase M24B family. The cofactor is Mn(2+).

It is found in the mitochondrion. Its subcellular location is the nucleus. Its function is as follows. Aminopeptidase which cleaves preprotein intermediates that carry destabilizing N-ter amino acid residues after the mitochondrial processing peptidase (MPP) cleavage site and is thus critical for stabilization of the mitochondrial proteome. This chain is Intermediate cleaving peptidase 55, mitochondrial, found in Arabidopsis thaliana (Mouse-ear cress).